The sequence spans 280 residues: Putative S-adenosyl-L-methionine-dependent methyltransferase FRAAL3836 (280 aa).

S-adenosyl-L-methionine contacts are provided by residues aspartate 121 and 150-151 (DL).

The protein belongs to the UPF0677 family.

Functionally, exhibits S-adenosyl-L-methionine-dependent methyltransferase activity. This is Putative S-adenosyl-L-methionine-dependent methyltransferase FRAAL3836 from Frankia alni (strain DSM 45986 / CECT 9034 / ACN14a).